The sequence spans 137 residues: Small ribosomal subunit protein uS19 (137 aa).

The segment at 115–137 is disordered; it reads RNRVSHGSAGVGATRSSKFVPLK.

The protein belongs to the universal ribosomal protein uS19 family.

Its function is as follows. Protein S19 forms a complex with S13 that binds strongly to the 16S ribosomal RNA. The chain is Small ribosomal subunit protein uS19 from Methanococcoides burtonii (strain DSM 6242 / NBRC 107633 / OCM 468 / ACE-M).